A 161-amino-acid chain; its full sequence is Allophycocyanin beta chain (161 aa).

N71 carries the N4-methylasparagine modification. Residue C81 participates in (2R,3E)-phycocyanobilin binding.

This sequence belongs to the phycobiliprotein family. In terms of assembly, heterodimer of an alpha and a beta chain. Contains one covalently linked phycocyanobilin chromophore.

It is found in the cellular thylakoid membrane. Functionally, light-harvesting photosynthetic bile pigment-protein from the phycobiliprotein complex. Allophycocyanin has a maximum absorption at approximately 650 nanometers. The polypeptide is Allophycocyanin beta chain (apcB) (Anabaena variabilis).